The primary structure comprises 227 residues: Cytochrome c oxidase subunit 2 (227 aa).

Over 1-14 (MAYPFQMGLQDATS) the chain is Mitochondrial intermembrane. The chain crosses the membrane as a helical span at residues 15 to 45 (PIMEELLHFHDHTLMIVFLISSLVLYIISLM). Topologically, residues 46–59 (LTTKLTHTSTMDAQ) are mitochondrial matrix. Residues 60-87 (EVETIWTILPAIILILIALPSLRILYMM) traverse the membrane as a helical segment. Residues 88–227 (DEINNPSLTV…HFEKWSASLL (140 aa)) are Mitochondrial intermembrane-facing. Cu cation-binding residues include H161, C196, E198, C200, H204, and M207. Mg(2+) is bound at residue E198.

This sequence belongs to the cytochrome c oxidase subunit 2 family. As to quaternary structure, component of the cytochrome c oxidase (complex IV, CIV), a multisubunit enzyme composed of 14 subunits. The complex is composed of a catalytic core of 3 subunits MT-CO1, MT-CO2 and MT-CO3, encoded in the mitochondrial DNA, and 11 supernumerary subunits COX4I, COX5A, COX5B, COX6A, COX6B, COX6C, COX7A, COX7B, COX7C, COX8 and NDUFA4, which are encoded in the nuclear genome. The complex exists as a monomer or a dimer and forms supercomplexes (SCs) in the inner mitochondrial membrane with NADH-ubiquinone oxidoreductase (complex I, CI) and ubiquinol-cytochrome c oxidoreductase (cytochrome b-c1 complex, complex III, CIII), resulting in different assemblies (supercomplex SCI(1)III(2)IV(1) and megacomplex MCI(2)III(2)IV(2)). Found in a complex with TMEM177, COA6, COX18, COX20, SCO1 and SCO2. Interacts with TMEM177 in a COX20-dependent manner. Interacts with COX20. Interacts with COX16. It depends on Cu cation as a cofactor.

The protein resides in the mitochondrion inner membrane. It carries out the reaction 4 Fe(II)-[cytochrome c] + O2 + 8 H(+)(in) = 4 Fe(III)-[cytochrome c] + 2 H2O + 4 H(+)(out). Functionally, component of the cytochrome c oxidase, the last enzyme in the mitochondrial electron transport chain which drives oxidative phosphorylation. The respiratory chain contains 3 multisubunit complexes succinate dehydrogenase (complex II, CII), ubiquinol-cytochrome c oxidoreductase (cytochrome b-c1 complex, complex III, CIII) and cytochrome c oxidase (complex IV, CIV), that cooperate to transfer electrons derived from NADH and succinate to molecular oxygen, creating an electrochemical gradient over the inner membrane that drives transmembrane transport and the ATP synthase. Cytochrome c oxidase is the component of the respiratory chain that catalyzes the reduction of oxygen to water. Electrons originating from reduced cytochrome c in the intermembrane space (IMS) are transferred via the dinuclear copper A center (CU(A)) of subunit 2 and heme A of subunit 1 to the active site in subunit 1, a binuclear center (BNC) formed by heme A3 and copper B (CU(B)). The BNC reduces molecular oxygen to 2 water molecules using 4 electrons from cytochrome c in the IMS and 4 protons from the mitochondrial matrix. This Ailurus fulgens (Himalayan red panda) protein is Cytochrome c oxidase subunit 2 (MT-CO2).